The primary structure comprises 342 residues: Ketol-acid reductoisomerase (NADP(+)) (342 aa).

The KARI N-terminal Rossmann domain maps to 2–181; sequence VKVYYNGDIQ…GGARAGVLET (180 aa). NADP(+) contacts are provided by residues 25–28, Arg48, Ser52, and 82–85; these read YGSQ and DEQQ. His107 is a catalytic residue. An NADP(+)-binding site is contributed by Gly133. Residues 182-327 form the KARI C-terminal knotted domain; the sequence is TFKEETETDL…RKLREMMPFV (146 aa). 4 residues coordinate Mg(2+): Asp190, Glu194, Glu226, and Glu230. Ser251 is a substrate binding site.

It belongs to the ketol-acid reductoisomerase family. The cofactor is Mg(2+).

The catalysed reaction is (2R)-2,3-dihydroxy-3-methylbutanoate + NADP(+) = (2S)-2-acetolactate + NADPH + H(+). The enzyme catalyses (2R,3R)-2,3-dihydroxy-3-methylpentanoate + NADP(+) = (S)-2-ethyl-2-hydroxy-3-oxobutanoate + NADPH + H(+). Its pathway is amino-acid biosynthesis; L-isoleucine biosynthesis; L-isoleucine from 2-oxobutanoate: step 2/4. It functions in the pathway amino-acid biosynthesis; L-valine biosynthesis; L-valine from pyruvate: step 2/4. Functionally, involved in the biosynthesis of branched-chain amino acids (BCAA). Catalyzes an alkyl-migration followed by a ketol-acid reduction of (S)-2-acetolactate (S2AL) to yield (R)-2,3-dihydroxy-isovalerate. In the isomerase reaction, S2AL is rearranged via a Mg-dependent methyl migration to produce 3-hydroxy-3-methyl-2-ketobutyrate (HMKB). In the reductase reaction, this 2-ketoacid undergoes a metal-dependent reduction by NADPH to yield (R)-2,3-dihydroxy-isovalerate. In Bacillus pumilus (strain SAFR-032), this protein is Ketol-acid reductoisomerase (NADP(+)).